Here is a 361-residue protein sequence, read N- to C-terminus: Outer mitochondrial transmembrane helix translocase (361 aa).

At 1 to 15 (MVHAEAFSRPLSRNE) the chain is on the mitochondrial intermembrane side. Residues 16-32 (VVGLIFRLTIFGAVTYF) form a helical membrane-spanning segment. Residues 33–361 (TIKWMVDAID…QSVLTHVCLD (329 aa)) are Cytoplasmic-facing. 133–140 (GPPGCGKT) provides a ligand contact to ATP. The residue at position 322 (Ser-322) is a Phosphoserine.

The protein belongs to the AAA ATPase family. MSP1 subfamily. As to quaternary structure, interacts with GRIA2 and GRIP1 in an ATP-dependent manner. ATAD1-catalyzed ATP hydrolysis disrupts not only its binding to GRIA2 and GRIP1, but also interaction between GRIP1 and GRIA2, leading to AMPAR complex disassembly.

The protein resides in the mitochondrion outer membrane. It localises to the peroxisome membrane. Its subcellular location is the postsynaptic cell membrane. It carries out the reaction [protein]-with a C-terminal TM segment(out) + ATP + H2O = [protein]-with a C-terminal TM segment(in) + ADP + phosphate + H(+). Outer mitochondrial translocase required to remove mislocalized tail-anchored transmembrane proteins on mitochondria. Specifically recognizes and binds tail-anchored transmembrane proteins: acts as a dislocase that mediates the ATP-dependent extraction of mistargeted tail-anchored transmembrane proteins from the mitochondrion outer membrane. Also plays a critical role in regulating the surface expression of AMPA receptors (AMPAR), thereby regulating synaptic plasticity and learning and memory. Required for NMDA-stimulated AMPAR internalization and inhibition of GRIA1 and GRIA2 recycling back to the plasma membrane; these activities are ATPase-dependent. This Rattus norvegicus (Rat) protein is Outer mitochondrial transmembrane helix translocase.